The chain runs to 256 residues: 5-oxoprolinase subunit A 2 (256 aa).

This sequence belongs to the LamB/PxpA family. As to quaternary structure, forms a complex composed of PxpA, PxpB and PxpC.

The enzyme catalyses 5-oxo-L-proline + ATP + 2 H2O = L-glutamate + ADP + phosphate + H(+). In terms of biological role, catalyzes the cleavage of 5-oxoproline to form L-glutamate coupled to the hydrolysis of ATP to ADP and inorganic phosphate. The sequence is that of 5-oxoprolinase subunit A 2 from Bradyrhizobium diazoefficiens (strain JCM 10833 / BCRC 13528 / IAM 13628 / NBRC 14792 / USDA 110).